The chain runs to 221 residues: Histone H1.3 (221 aa).

Low complexity predominate over residues 1-17 (MSETAPAAPAAPAPVEK). Residues 1–42 (MSETAPAAPAAPAPVEKTPVKKKAKKTGAAAGKRKASGPPVS) are disordered. S2 carries the post-translational modification N-acetylserine. Residue S2 is modified to Phosphoserine. An N6-acetyllysine modification is found at K17. T18 is subject to Phosphothreonine. The span at 20 to 36 (VKKKAKKTGAAAGKRKA) shows a compositional bias: basic residues. N6-(beta-hydroxybutyryl)lysine occurs at positions 33, 35, and 53. The 74-residue stretch at 37 to 110 (SGPPVSELIT…GASGSFKLNK (74 aa)) folds into the H15 domain. R55 is modified (citrulline). N6-(beta-hydroxybutyryl)lysine occurs at positions 65, 86, and 91. The tract at residues 92 to 221 (GTLVQTKGTG…KAKKAAPRKK (130 aa)) is disordered. A Phosphoserine; by PKC modification is found at S105. An N6-(beta-hydroxybutyryl)lysine mark is found at K107 and K141. Composition is skewed to basic residues over residues 120–141 (KAKKAGAAKAKKPAGAAKKPKK), 150–161 (KTAKKTPKKAKK), 170–187 (KVSKSPKKVKAAKPKKAA), and 194–221 (KAPKAKASKPKASKPKATKAKKAAPRKK).

This sequence belongs to the histone H1/H5 family. H1 histones are progressively phosphorylated during the cell cycle, becoming maximally phosphorylated during late G2 phase and M phase, and being dephosphorylated sharply thereafter. Post-translationally, hydroxybutyrylation of histones is induced by starvation. In terms of processing, citrullination at Arg-55 (H1R54ci) by PADI4 takes place within the DNA-binding site of H1 and results in its displacement from chromatin and global chromatin decondensation, thereby promoting pluripotency and stem cell maintenance.

Its subcellular location is the nucleus. It is found in the chromosome. In terms of biological role, histone H1 protein binds to linker DNA between nucleosomes forming the macromolecular structure known as the chromatin fiber. Histones H1 are necessary for the condensation of nucleosome chains into higher-order structured fibers. Also acts as a regulator of individual gene transcription through chromatin remodeling, nucleosome spacing and DNA methylation. This chain is Histone H1.3, found in Mus musculus (Mouse).